Here is a 185-residue protein sequence, read N- to C-terminus: Ribosome-recycling factor (185 aa).

Belongs to the RRF family.

The protein localises to the cytoplasm. Its function is as follows. Responsible for the release of ribosomes from messenger RNA at the termination of protein biosynthesis. May increase the efficiency of translation by recycling ribosomes from one round of translation to another. The sequence is that of Ribosome-recycling factor from Xanthomonas euvesicatoria pv. vesicatoria (strain 85-10) (Xanthomonas campestris pv. vesicatoria).